Consider the following 308-residue polypeptide: 4-hydroxy-3-methylbut-2-enyl diphosphate reductase 2 (308 aa).

Position 12 (Cys-12) interacts with [4Fe-4S] cluster. His-41 and His-74 together coordinate (2E)-4-hydroxy-3-methylbut-2-enyl diphosphate. Dimethylallyl diphosphate is bound by residues His-41 and His-74. Residues His-41 and His-74 each contribute to the isopentenyl diphosphate site. Residue Cys-96 participates in [4Fe-4S] cluster binding. His-124 contacts (2E)-4-hydroxy-3-methylbut-2-enyl diphosphate. Residue His-124 coordinates dimethylallyl diphosphate. Residue His-124 participates in isopentenyl diphosphate binding. Catalysis depends on Glu-126, which acts as the Proton donor. Thr-164 contacts (2E)-4-hydroxy-3-methylbut-2-enyl diphosphate. Residue Cys-194 participates in [4Fe-4S] cluster binding. (2E)-4-hydroxy-3-methylbut-2-enyl diphosphate is bound by residues Ser-222, Ser-223, Asn-224, and Ser-266. Residues Ser-222, Ser-223, Asn-224, and Ser-266 each contribute to the dimethylallyl diphosphate site. Isopentenyl diphosphate is bound by residues Ser-222, Ser-223, Asn-224, and Ser-266.

The protein belongs to the IspH family. It depends on [4Fe-4S] cluster as a cofactor.

The enzyme catalyses isopentenyl diphosphate + 2 oxidized [2Fe-2S]-[ferredoxin] + H2O = (2E)-4-hydroxy-3-methylbut-2-enyl diphosphate + 2 reduced [2Fe-2S]-[ferredoxin] + 2 H(+). The catalysed reaction is dimethylallyl diphosphate + 2 oxidized [2Fe-2S]-[ferredoxin] + H2O = (2E)-4-hydroxy-3-methylbut-2-enyl diphosphate + 2 reduced [2Fe-2S]-[ferredoxin] + 2 H(+). It functions in the pathway isoprenoid biosynthesis; dimethylallyl diphosphate biosynthesis; dimethylallyl diphosphate from (2E)-4-hydroxy-3-methylbutenyl diphosphate: step 1/1. The protein operates within isoprenoid biosynthesis; isopentenyl diphosphate biosynthesis via DXP pathway; isopentenyl diphosphate from 1-deoxy-D-xylulose 5-phosphate: step 6/6. Catalyzes the conversion of 1-hydroxy-2-methyl-2-(E)-butenyl 4-diphosphate (HMBPP) into a mixture of isopentenyl diphosphate (IPP) and dimethylallyl diphosphate (DMAPP). Acts in the terminal step of the DOXP/MEP pathway for isoprenoid precursor biosynthesis. The sequence is that of 4-hydroxy-3-methylbut-2-enyl diphosphate reductase 2 from Bradyrhizobium diazoefficiens (strain JCM 10833 / BCRC 13528 / IAM 13628 / NBRC 14792 / USDA 110).